We begin with the raw amino-acid sequence, 199 residues long: Regulator of G-protein signaling 16 (199 aa).

S-palmitoyl cysteine attachment occurs at residues C2 and C12. The region spanning S64–A180 is the RGS domain. Residues Y167 and Y176 each carry the phosphotyrosine modification.

As to quaternary structure, interacts with GNAI1 and GNAQ. Interacts with GNAI3, GNAI3 and GNAO1. Palmitoylated on Cys-2 and/or Cys-12. In terms of processing, phosphorylated. Phosphorylation at Tyr-167 by EGFR enhances GTPase accelerating (GAP) activity toward GNAI1. Predominantly found in the retina. Some expression has been found in the liver.

The protein resides in the membrane. Functionally, regulates G protein-coupled receptor signaling cascades. Inhibits signal transduction by increasing the GTPase activity of G protein alpha subunits, thereby driving them into their inactive GDP-bound form. Plays an important role in the phototransduction cascade by regulating the lifetime and effective concentration of activated transducin alpha. May regulate extra and intracellular mitogenic signals. This chain is Regulator of G-protein signaling 16 (Rgs16), found in Rattus norvegicus (Rat).